We begin with the raw amino-acid sequence, 320 residues long: FHA domain-containing protein FHA2 (320 aa).

Ala2 bears the N-acetylalanine mark. Residues 32–89 (IILGRNSKKATVDVDLSSLGGGMNISRNHARIFYDFTRRRFSLEVLGKNGCLVEGVLH) enclose the FHA domain. Residues 138–211 (VPYHNYQSGP…REGRSKVDRE (74 aa)) form a disordered region. The span at 163–178 (EYDDEDDDDDDDEEDD) shows a compositional bias: acidic residues. Basic and acidic residues predominate over residues 198 to 210 (GEKKREGRSKVDR).

Widely expressed.

It is found in the nucleus. Its function is as follows. May play a role in the control of plant organ development and specifically in the regulation of stamen development. Does not show transactivation activity in yeast. The chain is FHA domain-containing protein FHA2 from Arabidopsis thaliana (Mouse-ear cress).